The primary structure comprises 98 residues: Integration host factor subunit beta (98 aa).

Belongs to the bacterial histone-like protein family. Heterodimer of an alpha and a beta chain.

In terms of biological role, this protein is one of the two subunits of integration host factor, a specific DNA-binding protein that functions in genetic recombination as well as in transcriptional and translational control. This is Integration host factor subunit beta from Pseudomonas putida (strain GB-1).